The sequence spans 354 residues: Methionine import ATP-binding protein MetN (354 aa).

Positions 8–250 (LDHIDITFRQ…PKEALTQKFI (243 aa)) constitute an ABC transporter domain. Residue 42 to 49 (GYSGAGKS) participates in ATP binding.

It belongs to the ABC transporter superfamily. Methionine importer (TC 3.A.1.24) family. In terms of assembly, the complex is composed of two ATP-binding proteins (MetN), two transmembrane proteins (MetI) and a solute-binding protein (MetQ).

The protein resides in the cell membrane. It catalyses the reaction L-methionine(out) + ATP + H2O = L-methionine(in) + ADP + phosphate + H(+). The catalysed reaction is D-methionine(out) + ATP + H2O = D-methionine(in) + ADP + phosphate + H(+). Part of the ABC transporter complex MetNIQ involved in methionine import. Responsible for energy coupling to the transport system. In Streptococcus pyogenes serotype M6 (strain ATCC BAA-946 / MGAS10394), this protein is Methionine import ATP-binding protein MetN.